A 127-amino-acid polypeptide reads, in one-letter code: Aspartate 1-decarboxylase (127 aa).

The active-site Schiff-base intermediate with substrate; via pyruvic acid is the serine 25. Serine 25 bears the Pyruvic acid (Ser) mark. Threonine 57 is a substrate binding site. Catalysis depends on tyrosine 58, which acts as the Proton donor. 73–75 (GAA) contacts substrate.

Belongs to the PanD family. Heterooctamer of four alpha and four beta subunits. Pyruvate serves as cofactor. Post-translationally, is synthesized initially as an inactive proenzyme, which is activated by self-cleavage at a specific serine bond to produce a beta-subunit with a hydroxyl group at its C-terminus and an alpha-subunit with a pyruvoyl group at its N-terminus.

Its subcellular location is the cytoplasm. The catalysed reaction is L-aspartate + H(+) = beta-alanine + CO2. Its pathway is cofactor biosynthesis; (R)-pantothenate biosynthesis; beta-alanine from L-aspartate: step 1/1. Its function is as follows. Catalyzes the pyruvoyl-dependent decarboxylation of aspartate to produce beta-alanine. This chain is Aspartate 1-decarboxylase, found in Geobacillus sp. (strain WCH70).